A 504-amino-acid polypeptide reads, in one-letter code: Probable cytochrome P450 513F1 (504 aa).

Residues methionine 1 to isoleucine 21 traverse the membrane as a helical segment. A heme-binding site is contributed by cysteine 449.

It belongs to the cytochrome P450 family. Heme serves as cofactor.

Its subcellular location is the membrane. The chain is Probable cytochrome P450 513F1 (cyp513F1) from Dictyostelium discoideum (Social amoeba).